Reading from the N-terminus, the 786-residue chain is DNA repair and recombination protein RAD54-like (786 aa).

The segment at 2–9 is required for chromatin remodeling, strand pairing activities and coupling of ATPase activity; it reads RRSLAPSQ. Threonine 22 is subject to Phosphothreonine. Residues 165–340 enclose the Helicase ATP-binding domain; the sequence is EGKRGNFNGC…FSLVNFVNPE (176 aa). ATP is bound at residue 178-185; sequence DEMGLGKT. The short motif at 291–294 is the DEGH box element; the sequence is DEGH. The Helicase C-terminal domain occupies 497–654; that stretch reads LLDFMLAAIR…NNDSAEKHFT (158 aa). The segment at 740–786 is disordered; that stretch reads KQPTCITEDNHSEQPQLNSKRNANSVLENDDDEDFDPNSSDEKFLGF. Residues 752-766 are compositionally biased toward polar residues; that stretch reads EQPQLNSKRNANSVL.

The protein belongs to the SNF2/RAD54 helicase family. Interacts (via N-terminus) with spn-A/Rad51.

The protein localises to the nucleus. Its function is as follows. Involved in mitotic DNA repair and meiotic recombination. Functions in the recombinational DNA repair pathway. Essential for interhomolog gene conversion (GC), but may have a less important role in intersister GC than spn-A/Rad51. In the presence of DNA, spn-A/Rad51 enhances the ATPase activity of okr/Rad54. This Drosophila virilis (Fruit fly) protein is DNA repair and recombination protein RAD54-like.